Reading from the N-terminus, the 190-residue chain is (S)-2-hydroxypropylphosphonic acid epoxidase (190 aa).

One can recognise an HTH cro/C1-type domain in the interval 10–60 (KAHLEALLATRKMTLEHLQDVRHDATQVYFDGLEHLQNVAQYLAIPLSEFF). A DNA-binding region (H-T-H motif) is located at residues 20–40 (RKMTLEHLQDVRHDATQVYFD). Substrate is bound by residues Arg-87, Tyr-95, 125–128 (NGGH), and Glu-132. Positions 128, 132, and 171 each coordinate Fe cation. The region spanning 128–176 (HGSREIVYVTRGAVRVRWVGDNDELKEDVLNEGDSIFILPNVPHSFTNH) is the Cupin type-2 domain.

This sequence belongs to the non-heme iron-dependent dioxygenase family. In terms of assembly, homotrimer. Fe(2+) is required as a cofactor.

The enzyme catalyses (S)-2-hydroxypropylphosphonate + H2O2 = (1R,2S)-epoxypropylphosphonate + 2 H2O. It participates in antibiotic biosynthesis; fosfomycin biosynthesis. In terms of biological role, non-heme-dependent dioxygenase that catalyzes the oxidative epoxidation of (S)-2-hydroxypropylphosphonate into (1R,2S)-epoxypropylphosphonate, the final step in the biosynthesis of fosfomycin antibiotic. The sequence is that of (S)-2-hydroxypropylphosphonic acid epoxidase (hppE) from Pseudomonas syringae.